The chain runs to 307 residues: Elongation factor Ts (307 aa).

The tract at residues 80-83 is involved in Mg(2+) ion dislocation from EF-Tu; that stretch reads TDFV.

It belongs to the EF-Ts family.

Its subcellular location is the cytoplasm. In terms of biological role, associates with the EF-Tu.GDP complex and induces the exchange of GDP to GTP. It remains bound to the aminoacyl-tRNA.EF-Tu.GTP complex up to the GTP hydrolysis stage on the ribosome. The protein is Elongation factor Ts of Bradyrhizobium diazoefficiens (strain JCM 10833 / BCRC 13528 / IAM 13628 / NBRC 14792 / USDA 110).